A 242-amino-acid polypeptide reads, in one-letter code: Ubiquinone biosynthesis O-methyltransferase (242 aa).

S-adenosyl-L-methionine contacts are provided by Arg-36, Gly-56, Asp-77, and Met-130.

This sequence belongs to the methyltransferase superfamily. UbiG/COQ3 family.

It catalyses the reaction a 3-demethylubiquinol + S-adenosyl-L-methionine = a ubiquinol + S-adenosyl-L-homocysteine + H(+). It carries out the reaction a 3-(all-trans-polyprenyl)benzene-1,2-diol + S-adenosyl-L-methionine = a 2-methoxy-6-(all-trans-polyprenyl)phenol + S-adenosyl-L-homocysteine + H(+). It functions in the pathway cofactor biosynthesis; ubiquinone biosynthesis. In terms of biological role, O-methyltransferase that catalyzes the 2 O-methylation steps in the ubiquinone biosynthetic pathway. This is Ubiquinone biosynthesis O-methyltransferase from Pasteurella multocida (strain Pm70).